The primary structure comprises 191 residues: Protein GrpE (191 aa).

Residues 1-22 (MKDKHNQEHDHLSQEEPESCEK) form a disordered region.

This sequence belongs to the GrpE family. Homodimer.

Its subcellular location is the cytoplasm. In terms of biological role, participates actively in the response to hyperosmotic and heat shock by preventing the aggregation of stress-denatured proteins, in association with DnaK and GrpE. It is the nucleotide exchange factor for DnaK and may function as a thermosensor. Unfolded proteins bind initially to DnaJ; upon interaction with the DnaJ-bound protein, DnaK hydrolyzes its bound ATP, resulting in the formation of a stable complex. GrpE releases ADP from DnaK; ATP binding to DnaK triggers the release of the substrate protein, thus completing the reaction cycle. Several rounds of ATP-dependent interactions between DnaJ, DnaK and GrpE are required for fully efficient folding. The protein is Protein GrpE of Helicobacter pylori (strain Shi470).